A 1015-amino-acid polypeptide reads, in one-letter code: Protein HIRA (1015 aa).

WD repeat units lie at residues 11-53 (HNGK…QEDD) and 68-107 (NHLA…GPST). Ser-111 is modified (phosphoserine). WD repeat units lie at residues 129 to 168 (SHSG…EILA), 172 to 211 (GHSG…LETS), 220 to 263 (GGTT…TNMD), 266 to 322 (GHRK…PLVV), and 326 to 367 (LFDK…DPLS). Residues 408-431 (QQQQQLDQKNATTRETSSASSVTG) are disordered. Residues 413–431 (LDQKNATTRETSSASSVTG) show a composition bias toward polar residues. Positions 421 to 479 (RETSSASSVTGVVNGESLEDIRKNLLKKQVETRTADGRRRITPLCIAQLDTGDFSTAFF) are interaction with ASF1A. The tract at residues 421 to 727 (RETSSASSVT…RLKCNREGKE (307 aa)) is interaction with CCNA1. Residues 439–475 (EDIRKNLLKKQVETRTADGRRRITPLCIAQLDTGDFS) form a required for repression of histone gene transcription region. Low complexity-rich tracts occupy residues 494–507 (SSPS…LDSS) and 540–556 (ATST…TTPS). Residues 494–558 (SSPSGQQLLP…PSVLTTPSKI (65 aa)) are disordered. A Phosphoserine modification is found at Ser-548. Thr-554 is subject to Phosphothreonine. Phosphoserine is present on Ser-556. A Phosphothreonine modification is found at Thr-575. Ser-583, Ser-608, Ser-609, Ser-610, Ser-612, Ser-659, and Ser-673 each carry phosphoserine. Interaction with PAX3 stretches follow at residues 593 to 737 (KEQN…SRVL) and 738 to 826 (TAAG…SQIL). The interval 594 to 824 (EQNLVKELRS…LSGSDMTVSQ (231 aa)) is interaction with histone H2B. Over residues 603 to 617 (SRELESSSDSDEKVH) the composition is skewed to basic and acidic residues. The interval 603–623 (SRELESSSDSDEKVHLAKPSS) is disordered. The segment at 736–1015 (VLTAAGSCDV…QEQLDILRDK (280 aa)) is interaction with histone H4.

The protein belongs to the WD repeat HIR1 family. Interacts with CCNA1, HIRIP3 and NFU1/HIRIP5. Part of a complex which includes ASF1A, CABIN1, histone H3.3, histone H4 and UBN1. Interacts with histone H2B, histone H3-3B, PAX3 and PAX7. Sumoylated. In terms of processing, phosphorylated by CDK2/CCNA1 and CDK2/CCNE1 on Thr-554 in vitro. Also phosphorylated on Thr-554 in vivo. In terms of tissue distribution, expressed in cerebrum, cerebellum, heart, kidney, liver, lung and spleen.

It localises to the nucleus. It is found in the PML body. In terms of biological role, required for the periodic repression of histone gene transcription during the cell cycle. Cooperates with ASF1A to promote replication-independent chromatin assembly. Required for the formation of senescence-associated heterochromatin foci (SAHF) and efficient senescence-associated cell cycle exit. This Mus musculus (Mouse) protein is Protein HIRA (Hira).